The chain runs to 339 residues: Serine/threonine-protein kinase pdik1l-B (339 aa).

One can recognise a Protein kinase domain in the interval Y8–F332. Residues V14–V22 and K37 contribute to the ATP site. Residue D164 is the Proton acceptor of the active site.

It belongs to the protein kinase superfamily. Ser/Thr protein kinase family.

The protein localises to the nucleus. The catalysed reaction is L-seryl-[protein] + ATP = O-phospho-L-seryl-[protein] + ADP + H(+). It catalyses the reaction L-threonyl-[protein] + ATP = O-phospho-L-threonyl-[protein] + ADP + H(+). This is Serine/threonine-protein kinase pdik1l-B (pdik1-b) from Xenopus laevis (African clawed frog).